The sequence spans 764 residues: Nucleolar complex-associated protein 2 (764 aa).

Positions 3-69 form a coiled coil; the sequence is AKDDKKRVKK…EEELKRLQEK (67 aa). Disordered stretches follow at residues 23-67, 89-113, 627-646, and 651-726; these read ELNN…KRLQ, ATEI…EGDD, AVFG…DRME, and AFNS…EDDA. Positions 30–41 are enriched in basic and acidic residues; it reads IDAHDIVMEQKS. Over residues 42-51 the composition is skewed to basic residues; that stretch reads DKKRGKKVKS. The span at 52-67 shows a compositional bias: basic and acidic residues; that stretch reads KKAEAEEHEEELKRLQ. The span at 90-113 shows a compositional bias: acidic residues; it reads TEIEDDADVEPDTDLEDTEKEGDD. A compositionally biased stretch (basic and acidic residues) spans 661 to 672; sequence DSKEKEPEEEKT. Residues 673-680 carry the Nuclear localization signal 1 motif; sequence KKKKRKRG. Over residues 673–682 the composition is skewed to basic residues; it reads KKKKRKRGGK. Positions 693-726 are enriched in acidic residues; sequence GLGEDDVVEDFVLSSDEEEEDLFDIGGDKDEDDA. A Nuclear localization signal 2 motif is present at residues 738–745; that stretch reads SKKTKGTY.

The protein belongs to the NOC2 family. As to quaternary structure, component of nucleolar complexes. Forms homodimers. Interacts with RBL and NOC3 in both the nucleolus and nucleoplasm. Binds to SWA2.

It is found in the nucleus. The protein localises to the nucleolus. The protein resides in the nucleoplasm. In terms of biological role, together with SWA2, probably involved in pre-ribosome export from the nucleus to the cytoplasm. This is Nucleolar complex-associated protein 2 from Arabidopsis thaliana (Mouse-ear cress).